Reading from the N-terminus, the 150-residue chain is MNKTSLPPIDSIDRQWYVVDAENQTLGRLATEVAAVLRGKTNPSFTPHLDTGDFVVVVNAEKIKVSGRKPQQKLYRRHSGRPGGMKVETFEALQERIPERIVEKAIKGMLPHNALGRQMFRKLKVYKGTEHPHAAQKPQPLQLNPSASAQ.

The tract at residues 129 to 150 (TEHPHAAQKPQPLQLNPSASAQ) is disordered. Residues 139 to 150 (QPLQLNPSASAQ) show a composition bias toward polar residues.

The protein belongs to the universal ribosomal protein uL13 family. Part of the 50S ribosomal subunit.

This protein is one of the early assembly proteins of the 50S ribosomal subunit, although it is not seen to bind rRNA by itself. It is important during the early stages of 50S assembly. This chain is Large ribosomal subunit protein uL13, found in Synechococcus sp. (strain CC9605).